We begin with the raw amino-acid sequence, 276 residues long: Undecaprenyl-diphosphatase (276 aa).

Helical transmembrane passes span 84 to 104, 115 to 135, 188 to 208, 222 to 242, and 250 to 270; these read YRLG…GLFF, LWVV…AEYV, FGFL…LPDA, QLLV…AWLL, and MYWF…LLAT.

This sequence belongs to the UppP family.

It localises to the cell membrane. The enzyme catalyses di-trans,octa-cis-undecaprenyl diphosphate + H2O = di-trans,octa-cis-undecaprenyl phosphate + phosphate + H(+). Its function is as follows. Catalyzes the dephosphorylation of undecaprenyl diphosphate (UPP). Confers resistance to bacitracin. This Mycobacterium tuberculosis (strain ATCC 25177 / H37Ra) protein is Undecaprenyl-diphosphatase.